A 338-amino-acid polypeptide reads, in one-letter code: DNA-directed RNA polymerase subunit alpha (338 aa).

Residues 1 to 234 (MIERNWNELI…DQLQIFITFE (234 aa)) are alpha N-terminal domain (alpha-NTD). An alpha C-terminal domain (alpha-CTD) region spans residues 250 to 338 (FNPALLKKVD…DLAKKFEDQI (89 aa)).

It belongs to the RNA polymerase alpha chain family. As to quaternary structure, homodimer. The RNAP catalytic core consists of 2 alpha, 1 beta, 1 beta' and 1 omega subunit. When a sigma factor is associated with the core the holoenzyme is formed, which can initiate transcription.

The catalysed reaction is RNA(n) + a ribonucleoside 5'-triphosphate = RNA(n+1) + diphosphate. DNA-dependent RNA polymerase catalyzes the transcription of DNA into RNA using the four ribonucleoside triphosphates as substrates. The polypeptide is DNA-directed RNA polymerase subunit alpha (Caulobacter sp. (strain K31)).